Consider the following 1199-residue polypeptide: DNA-directed RNA polymerase subunit beta' (1199 aa).

Cys60, Cys62, Cys75, and Cys78 together coordinate Zn(2+). Mg(2+)-binding residues include Asp449, Asp451, and Asp453. Zn(2+) is bound by residues Cys818, Cys892, Cys899, and Cys902.

Belongs to the RNA polymerase beta' chain family. In terms of assembly, the RNAP catalytic core consists of 2 alpha, 1 beta, 1 beta' and 1 omega subunit. When a sigma factor is associated with the core the holoenzyme is formed, which can initiate transcription. Mg(2+) serves as cofactor. Zn(2+) is required as a cofactor.

It carries out the reaction RNA(n) + a ribonucleoside 5'-triphosphate = RNA(n+1) + diphosphate. Its function is as follows. DNA-dependent RNA polymerase catalyzes the transcription of DNA into RNA using the four ribonucleoside triphosphates as substrates. This Geobacillus kaustophilus (strain HTA426) protein is DNA-directed RNA polymerase subunit beta'.